A 226-amino-acid chain; its full sequence is Agamous-like MADS-box protein AGL23 (226 aa).

The 61-residue stretch at 6–66 (LGRRKVEIVK…GKVFSFGHPN (61 aa)) folds into the MADS-box domain. A coiled-coil region spans residues 95-132 (VQMLNKSYTEVKAEVEKEQKNKQSRAQNERENENAEEW). Residues 108–127 (EVEKEQKNKQSRAQNERENE) are compositionally biased toward basic and acidic residues. The interval 108-131 (EVEKEQKNKQSRAQNERENENAEE) is disordered.

The protein localises to the nucleus. Its function is as follows. Probable transcription factor that controls female gametophyte (megagametogenesis) development and chloroplast biogenesis during embryo development. This is Agamous-like MADS-box protein AGL23 from Arabidopsis thaliana (Mouse-ear cress).